The chain runs to 313 residues: Protein FixB (313 aa).

Position 255–283 (255–283 (LYLAVGISGQIQHMVGANASQTIFAINKD)) interacts with FAD.

Belongs to the ETF alpha-subunit/FixB family. As to quaternary structure, heterodimer of FixA and FixB.

It functions in the pathway amine and polyamine metabolism; carnitine metabolism. Its function is as follows. Required for anaerobic carnitine reduction. May bring reductant to CaiA. This Escherichia coli O127:H6 (strain E2348/69 / EPEC) protein is Protein FixB.